The chain runs to 249 residues: Pleckstrin homology domain-containing family F member 2 (249 aa).

Residue serine 16 is modified to Phosphoserine. In terms of domain architecture, PH spans 35-131 (VLIGEGVLTK…WMNHINKCVT (97 aa)). The residue at position 44 (lysine 44) is an N6-acetyllysine. An FYVE-type zinc finger spans residues 152–212 (DSEATVCMRC…ICDFCYDLLS (61 aa)). Residues cysteine 158, cysteine 161, cysteine 175, cysteine 178, cysteine 183, cysteine 186, cysteine 204, and cysteine 207 each coordinate Zn(2+). Residues 221 to 233 (PTRSDSYSQSLKS) are compositionally biased toward polar residues. Positions 221–249 (PTRSDSYSQSLKSPLNDASDDDDDDDSSD) are disordered. The segment covering 238 to 249 (ASDDDDDDDSSD) has biased composition (acidic residues). Phosphoserine is present on residues serine 239 and serine 248.

May interact with EEA1. As to expression, expressed in brain, stomach and thymus, as well as in kidney, spleen, and skeletal muscle. Also expressed in peripheral blood mononuclear cells and dendritic cells.

The protein resides in the early endosome membrane. The protein localises to the endoplasmic reticulum. In terms of biological role, may play a role in early endosome fusion upstream of RAB5, hence regulating receptor trafficking and fluid-phase transport. Enhances cellular sensitivity to TNF-induced apoptosis. This Mus musculus (Mouse) protein is Pleckstrin homology domain-containing family F member 2 (Plekhf2).